Consider the following 86-residue polypeptide: Small ribosomal subunit protein bS20 (86 aa).

Residues 1–27 (MANSKQAKKRAGQSEKRRQHNASRRSM) are disordered.

Belongs to the bacterial ribosomal protein bS20 family.

Functionally, binds directly to 16S ribosomal RNA. This is Small ribosomal subunit protein bS20 from Colwellia psychrerythraea (strain 34H / ATCC BAA-681) (Vibrio psychroerythus).